The primary structure comprises 367 residues: Probable butyrate kinase (367 aa).

Belongs to the acetokinase family.

It is found in the cytoplasm. It carries out the reaction butanoate + ATP = butanoyl phosphate + ADP. In Bacillus cereus (strain B4264), this protein is Probable butyrate kinase.